Here is a 396-residue protein sequence, read N- to C-terminus: S-adenosylmethionine synthase (396 aa).

Position 16 (His16) interacts with ATP. Asp18 is a binding site for Mg(2+). Residue Glu44 participates in K(+) binding. Residues Glu57 and Gln100 each coordinate L-methionine. Residues 100–110 (QSKDIALGVDK) form a flexible loop region. Residues 176–178 (DGK), 243–244 (RF), Asp252, 258–259 (RK), Ala275, and Lys279 each bind ATP. L-methionine is bound at residue Asp252. Lys283 contacts L-methionine.

Belongs to the AdoMet synthase family. In terms of assembly, homotetramer; dimer of dimers. Requires Mg(2+) as cofactor. K(+) is required as a cofactor.

It is found in the cytoplasm. It catalyses the reaction L-methionine + ATP + H2O = S-adenosyl-L-methionine + phosphate + diphosphate. It functions in the pathway amino-acid biosynthesis; S-adenosyl-L-methionine biosynthesis; S-adenosyl-L-methionine from L-methionine: step 1/1. In terms of biological role, catalyzes the formation of S-adenosylmethionine (AdoMet) from methionine and ATP. The overall synthetic reaction is composed of two sequential steps, AdoMet formation and the subsequent tripolyphosphate hydrolysis which occurs prior to release of AdoMet from the enzyme. This chain is S-adenosylmethionine synthase, found in Lachnoclostridium phytofermentans (strain ATCC 700394 / DSM 18823 / ISDg) (Clostridium phytofermentans).